We begin with the raw amino-acid sequence, 352 residues long: tRNA pseudouridine synthase D (352 aa).

Asp81 (nucleophile) is an active-site residue. Residues 157–303 (GIPNYFGVQR…MEHERRILRL (147 aa)) enclose the TRUD domain.

This sequence belongs to the pseudouridine synthase TruD family.

The catalysed reaction is uridine(13) in tRNA = pseudouridine(13) in tRNA. Responsible for synthesis of pseudouridine from uracil-13 in transfer RNAs. The chain is tRNA pseudouridine synthase D from Pseudomonas syringae pv. tomato (strain ATCC BAA-871 / DC3000).